A 714-amino-acid polypeptide reads, in one-letter code: Transcription factor SFL2 (714 aa).

The DNA-binding element occupies 15 to 134; it reads AFVHKLYTML…LVYIKRRSSS (120 aa). 3 disordered regions span residues 187-467, 565-658, and 670-714; these read YYQQ…VGVT, STSV…NNTN, and SHSQ…NMNK. Pro residues-rich tracts occupy residues 193–207 and 223–235; these read GQVP…PPHQ and QPPP…PPQP. Residues 266-275 are compositionally biased toward polar residues; that stretch reads LDQTQPLSYT. Residues 276–285 are compositionally biased toward low complexity; the sequence is PQLEYQQQQY. Over residues 286 to 296 the composition is skewed to pro residues; that stretch reads PQPPLPPPPPQ. 2 stretches are compositionally biased toward polar residues: residues 310 to 321 and 354 to 372; these read DNLSRPSPNEQH and SEGS…LNNE. Residues 376 to 389 show a composition bias toward low complexity; that stretch reads ESSTSSSSTTVTST. Polar residues-rich tracts occupy residues 413–435 and 444–461; these read SRMN…TQNG and LIPS…TGTD. Over residues 574-591 the composition is skewed to low complexity; it reads GPFSTSTSTSTTSPTLSS. A compositionally biased stretch (polar residues) spans 599–608; the sequence is EPQNSTIANG. 2 stretches are compositionally biased toward low complexity: residues 609 to 641 and 648 to 658; these read TSIR…RQLS and QQQQQPNNNTN. The segment covering 703 to 714 has biased composition (basic and acidic residues); sequence SKSDDDTDNMNK.

It belongs to the HSF family.

It is found in the nucleus. In terms of biological role, transcription factor that plays a role of activator of filamentous growth and which is involved in invasive growth at a high temperature. Required for human oral epithelium colonization and damage. Promotes filamentous growth in EFG1- and FLO8-dependent manners. Antagonizes functions of SFL1. In Candida albicans (strain SC5314 / ATCC MYA-2876) (Yeast), this protein is Transcription factor SFL2 (SFL2).